Reading from the N-terminus, the 71-residue chain is uncharacterized protein (71 aa).

The protein localises to the mitochondrion matrix. It is found in the kinetoplast. This is an uncharacterized protein from Trypanosoma brucei brucei.